Consider the following 607-residue polypeptide: Siderochrome iron transporter 2 (607 aa).

Residues 1-46 (MGLFGSFGARNKATPQVPPGAVAKAPEGTPKGPETNDQPDMDSSRL) form a disordered region. Transmembrane regions (helical) follow at residues 86-106 (VWAT…QSGI), 129-149 (ILSS…LNLW), 152-172 (AEGF…LAAC), 180-200 (AGYV…DVFV), 210-230 (AFTF…APLA), 242-262 (WAYG…AVVF), 297-317 (IIGA…FSLA), 326-346 (SAAF…FAAW), 367-387 (LGAC…DLYF), 404-424 (YMTQ…GLWV), 432-452 (HTCL…MIHF), 459-479 (IGYV…LVIG), and 499-519 (FIGL…AAIY). A glycan (N-linked (GlcNAc...) asparagine) is linked at Asn-538. A helical transmembrane segment spans residues 573 to 593 (FGAVAATCILILGIPAIAVWK).

This sequence belongs to the major facilitator superfamily.

It localises to the cell membrane. Functionally, major facilitator transporter involved in ferrichrome (FC) uptake. This Aspergillus fumigatus (strain ATCC MYA-4609 / CBS 101355 / FGSC A1100 / Af293) (Neosartorya fumigata) protein is Siderochrome iron transporter 2.